Here is a 158-residue protein sequence, read N- to C-terminus: uncharacterized protein (158 aa).

The next 3 helical transmembrane spans lie at 45–65 (GIFF…PAVI), 76–96 (LAIG…IFAW), and 106–126 (FILV…VFAL).

It to U.parvum UU007, UU041 and UU042.

The protein localises to the cell membrane. This is an uncharacterized protein from Ureaplasma parvum serovar 3 (strain ATCC 700970).